A 459-amino-acid chain; its full sequence is Argininosuccinate lyase (459 aa).

The protein belongs to the lyase 1 family. Argininosuccinate lyase subfamily.

The protein localises to the cytoplasm. It carries out the reaction 2-(N(omega)-L-arginino)succinate = fumarate + L-arginine. It functions in the pathway amino-acid biosynthesis; L-arginine biosynthesis; L-arginine from L-ornithine and carbamoyl phosphate: step 3/3. The protein is Argininosuccinate lyase of Photorhabdus laumondii subsp. laumondii (strain DSM 15139 / CIP 105565 / TT01) (Photorhabdus luminescens subsp. laumondii).